The following is a 1039-amino-acid chain: uncharacterized protein (1039 aa).

Residues 1–19 (MSLLMAHRKSKSSQRKLRN) are compositionally biased toward basic residues. The segment at 1–38 (MSLLMAHRKSKSSQRKLRNRSSSLTPQKRRIRASKGSH) is disordered.

This is an uncharacterized protein from Sinorhizobium fredii (strain NBRC 101917 / NGR234).